The primary structure comprises 779 residues: Filament-like plant protein 1 (779 aa).

Positions 1 to 14 are enriched in basic and acidic residues; that stretch reads MEKRKRESSERSFG. Disordered regions lie at residues 1 to 55, 253 to 274, and 315 to 336; these read MEKR…ETEK, ASFN…MDVS, and PETP…VVVP. Residues 47–200 are a coiled coil; sequence VSLEVETEKE…KENVMLRHEL (154 aa). The segment covering 256–272 has biased composition (basic and acidic residues); it reads NDHRSTDSHSDGGERMD. Residues 324–336 show a composition bias toward low complexity; that stretch reads SGPESVTEEVVVP. Positions 337–674 form a coiled coil; it reads SENSLASEIE…ANCQKTIASL (338 aa). The span at 718 to 731 shows a compositional bias: basic and acidic residues; sequence FMTRNHPESIKPTK. The disordered stretch occupies residues 718-764; the sequence is FMTRNHPESIKPTKETSPSSSSSTASAAVSMPVSTNRGSSEKNRNGF. The span at 733-752 shows a compositional bias: low complexity; the sequence is TSPSSSSSTASAAVSMPVST.

Belongs to the FPP family. As to quaternary structure, interacts with WPP/MAF proteins.

The protein is Filament-like plant protein 1 (FPP1) of Arabidopsis thaliana (Mouse-ear cress).